The primary structure comprises 705 residues: tRNA 5-methylaminomethyl-2-thiouridine biosynthesis bifunctional protein MnmC (705 aa).

Residues 1–241 (MTIKTADIQF…KREMLAGIIA (241 aa)) form a tRNA (mnm(5)s(2)U34)-methyltransferase region. The FAD-dependent cmnm(5)s(2)U34 oxidoreductase stretch occupies residues 289-705 (IGAGIAGASM…LIRQLIRREV (417 aa)).

In the N-terminal section; belongs to the methyltransferase superfamily. tRNA (mnm(5)s(2)U34)-methyltransferase family. It in the C-terminal section; belongs to the DAO family. FAD serves as cofactor.

It is found in the cytoplasm. It catalyses the reaction 5-aminomethyl-2-thiouridine(34) in tRNA + S-adenosyl-L-methionine = 5-methylaminomethyl-2-thiouridine(34) in tRNA + S-adenosyl-L-homocysteine + H(+). Its function is as follows. Catalyzes the last two steps in the biosynthesis of 5-methylaminomethyl-2-thiouridine (mnm(5)s(2)U) at the wobble position (U34) in tRNA. Catalyzes the FAD-dependent demodification of cmnm(5)s(2)U34 to nm(5)s(2)U34, followed by the transfer of a methyl group from S-adenosyl-L-methionine to nm(5)s(2)U34, to form mnm(5)s(2)U34. The polypeptide is tRNA 5-methylaminomethyl-2-thiouridine biosynthesis bifunctional protein MnmC (Pseudoalteromonas atlantica (strain T6c / ATCC BAA-1087)).